Reading from the N-terminus, the 50-residue chain is Large ribosomal subunit protein eL39 (50 aa).

The segment covering 1 to 12 has biased composition (basic residues); that stretch reads MGKKSKASKKRL. Disordered stretches follow at residues 1–20 and 30–50; these read MGKKSKASKKRLAKLERQNS and TNRDVQRNPKRRNWRRNDTDE.

Belongs to the eukaryotic ribosomal protein eL39 family.

The protein is Large ribosomal subunit protein eL39 (rpl39e) of Halobacterium salinarum (strain ATCC 700922 / JCM 11081 / NRC-1) (Halobacterium halobium).